The chain runs to 226 residues: 2-C-methyl-D-erythritol 4-phosphate cytidylyltransferase (226 aa).

The protein belongs to the IspD/TarI cytidylyltransferase family. IspD subfamily.

The catalysed reaction is 2-C-methyl-D-erythritol 4-phosphate + CTP + H(+) = 4-CDP-2-C-methyl-D-erythritol + diphosphate. It participates in isoprenoid biosynthesis; isopentenyl diphosphate biosynthesis via DXP pathway; isopentenyl diphosphate from 1-deoxy-D-xylulose 5-phosphate: step 2/6. Functionally, catalyzes the formation of 4-diphosphocytidyl-2-C-methyl-D-erythritol from CTP and 2-C-methyl-D-erythritol 4-phosphate (MEP). In Microcystis aeruginosa (strain NIES-843 / IAM M-2473), this protein is 2-C-methyl-D-erythritol 4-phosphate cytidylyltransferase.